Consider the following 80-residue polypeptide: Progonadoliberin-1 (80 aa).

Residues 1–21 (MGIKRALWWMVVCVVVLQVSA) form the signal peptide. The residue at position 22 (Gln-22) is a Pyrrolidone carboxylic acid. Position 31 is a glycine amide (Gly-31).

The protein belongs to the GnRH family.

It is found in the secreted. In terms of biological role, stimulates the secretion of gonadotropins. The sequence is that of Progonadoliberin-1 (gnrh1) from Clarias gariepinus (North African catfish).